The chain runs to 193 residues: ATP-dependent Clp protease proteolytic subunit 1 (193 aa).

Residue Ser98 is the Nucleophile of the active site. Residue His123 is part of the active site.

Belongs to the peptidase S14 family. In terms of assembly, fourteen ClpP subunits assemble into 2 heptameric rings which stack back to back to give a disk-like structure with a central cavity, resembling the structure of eukaryotic proteasomes.

The protein resides in the cytoplasm. The catalysed reaction is Hydrolysis of proteins to small peptides in the presence of ATP and magnesium. alpha-casein is the usual test substrate. In the absence of ATP, only oligopeptides shorter than five residues are hydrolyzed (such as succinyl-Leu-Tyr-|-NHMec, and Leu-Tyr-Leu-|-Tyr-Trp, in which cleavage of the -Tyr-|-Leu- and -Tyr-|-Trp bonds also occurs).. Cleaves peptides in various proteins in a process that requires ATP hydrolysis. Has a chymotrypsin-like activity. Plays a major role in the degradation of misfolded proteins. This chain is ATP-dependent Clp protease proteolytic subunit 1, found in Bacillus anthracis.